The sequence spans 756 residues: Centromere protein I (756 aa).

The interval 1 to 60 is disordered; it reads MSPQKRVKNVQAQNRTSQGSSSFQTTLSAWKVKQDPSNSKNISKHGQNNPVGDYEHADDQ. 2 stretches are compositionally biased toward polar residues: residues 10-28 and 35-50; these read VQAQNRTSQGSSSFQTTLS and DPSNSKNISKHGQNNP.

It belongs to the CENP-I/CTF3 family. Component of the CENPA-CAD complex, composed of CENPI, CENPK, CENPL, CENPO, CENPP, CENPQ, CENPR and CENPS. The CENPA-CAD complex interacts with the CENPA-NAC complex, at least composed of CENPA, CENPC, CENPH, CENPM, CENPN, CENPT and CENPU. Interacts with SENP6. Sumoylated. Sumoylated form can be polyubiquitinated by RNF4, leading to its degradation. Desumoylation by SENP6 prevents its degradation.

It localises to the nucleus. The protein localises to the chromosome. It is found in the centromere. Its function is as follows. Component of the CENPA-CAD (nucleosome distal) complex, a complex recruited to centromeres which is involved in assembly of kinetochore proteins, mitotic progression and chromosome segregation. May be involved in incorporation of newly synthesized CENPA into centromeres via its interaction with the CENPA-NAC complex. Required for the localization of CENPF, MAD1L1 and MAD2 (MAD2L1 or MAD2L2) to kinetochores. Involved in the response of gonadal tissues to follicle-stimulating hormone. The polypeptide is Centromere protein I (CENPI) (Homo sapiens (Human)).